The sequence spans 397 residues: MIIMVTEVDVLVIGAGPAGSTAAKHAALGGADVLLIDKKSEIGAPKRCAEGVSIGGLESLGIEPNPRWITKKLDGVRMVSPNGTDVWLTSDKVELPEAGYILERKVFDKFMAMDAARAGSRIMVKTIATGMERTDDGYLVSAECMGEKFEIKARIVIAADGPESRVARWAGLNTATRPKDMESAAQFEMVGVEMEDNNCIEFYFGSVAPGGYALDIPEGDDIANVGLGVLSTETDKSAYEHLLEFVESCPATRNAQPVELNIGGDPVGGMPKKLVADSLMVVGDAAGQVNPLTGGGIISGMKGGMLAGQVAAAAVSEGDVTARRLGEYERLCREEIGDEISKYLKVKEYLLTLSDSELDSIAEAFQDVEFEKVSTTELVKKLIKVSPKALLKLGKLF.

The FAD site is built by A18, D37, C48, A49, G51, R104, A128, D284, G296, and I297.

The protein belongs to the geranylgeranyl reductase family. DGGGPL reductase subfamily. It depends on FAD as a cofactor.

The catalysed reaction is a 2,3-bis-O-phytanyl-sn-glycerol 1-phospholipid + 8 A = a 2,3-bis-O-(geranylgeranyl)-sn-glycerol 1-phospholipid + 8 AH2. It catalyses the reaction 2,3-bis-O-(phytanyl)-sn-glycerol 1-phosphate + 8 A = 2,3-bis-O-(geranylgeranyl)-sn-glycerol 1-phosphate + 8 AH2. It carries out the reaction CDP-2,3-bis-O-(geranylgeranyl)-sn-glycerol + 8 AH2 = CDP-2,3-bis-O-(phytanyl)-sn-glycerol + 8 A. The enzyme catalyses archaetidylserine + 8 AH2 = 2,3-bis-O-phytanyl-sn-glycero-3-phospho-L-serine + 8 A. It participates in membrane lipid metabolism; glycerophospholipid metabolism. Is involved in the reduction of 2,3-digeranylgeranylglycerophospholipids (unsaturated archaeols) into 2,3-diphytanylglycerophospholipids (saturated archaeols) in the biosynthesis of archaeal membrane lipids. Catalyzes the formation of archaetidic acid (2,3-di-O-phytanyl-sn-glyceryl phosphate) from 2,3-di-O-geranylgeranylglyceryl phosphate (DGGGP) via the hydrogenation of each double bond of the isoprenoid chains. Is also probably able to reduce double bonds of geranyl groups in CDP-2,3-bis-O-(geranylgeranyl)-sn-glycerol and archaetidylserine, thus acting at various stages in the biosynthesis of archaeal membrane lipids. The polypeptide is Digeranylgeranylglycerophospholipid reductase 1 (Methanothermobacter thermautotrophicus (strain ATCC 29096 / DSM 1053 / JCM 10044 / NBRC 100330 / Delta H) (Methanobacterium thermoautotrophicum)).